The primary structure comprises 304 residues: Energy-coupling factor transporter ATP-binding protein EcfA2 (304 aa).

In terms of domain architecture, ABC transporter spans 11 to 260 (LKADEILAVS…QTFLEKTTIV (250 aa)). 54–61 (GDSGSGKS) serves as a coordination point for ATP.

This sequence belongs to the ABC transporter superfamily. Energy-coupling factor EcfA family. In terms of assembly, forms a stable energy-coupling factor (ECF) transporter complex composed of 2 membrane-embedded substrate-binding proteins (S component), 2 ATP-binding proteins (A component) and 2 transmembrane proteins (T component).

The protein localises to the cell membrane. Its function is as follows. ATP-binding (A) component of a common energy-coupling factor (ECF) ABC-transporter complex. Unlike classic ABC transporters this ECF transporter provides the energy necessary to transport a number of different substrates. This chain is Energy-coupling factor transporter ATP-binding protein EcfA2, found in Mycoplasma genitalium (strain ATCC 33530 / DSM 19775 / NCTC 10195 / G37) (Mycoplasmoides genitalium).